The chain runs to 310 residues: Membrane protein insertase YidC 2 (310 aa).

The signal sequence occupies residues 1-23 (MKKTLKRILFSSLSLSMLLLLTG). Residue Cys-24 is the site of N-palmitoyl cysteine attachment. Cys-24 is lipidated: S-diacylglycerol cysteine. The next 5 helical transmembrane spans lie at 33–53 (PYGV…TYFA), 58–78 (LGFG…ILPL), 135–155 (FGGI…AIFF), 180–200 (LTVI…QGVP), and 219–239 (VFMS…GGIF). The interval 266 to 310 (NPPKAYKANNARKDVTNSTKATESNQAIITSKKTNRNAGKQKRRG) is disordered. The span at 281 to 297 (TNSTKATESNQAIITSK) shows a compositional bias: polar residues. Residues 298–310 (KTNRNAGKQKRRG) show a composition bias toward basic residues.

The protein belongs to the OXA1/ALB3/YidC family. Type 2 subfamily.

The protein resides in the cell membrane. Functionally, required for the insertion and/or proper folding and/or complex formation of integral membrane proteins into the membrane. Involved in integration of membrane proteins that insert both dependently and independently of the Sec translocase complex, as well as at least some lipoproteins. In Streptococcus agalactiae serotype V (strain ATCC BAA-611 / 2603 V/R), this protein is Membrane protein insertase YidC 2.